Reading from the N-terminus, the 523-residue chain is Mitochondrial distribution and morphology protein 34 (523 aa).

Positions 1–200 constitute an SMP-LTD domain; that stretch reads MSFKVNWKSL…LPTLIHQFSL (200 aa). Residues 489-523 are disordered; that stretch reads ELSMDRSGKRKQRNYGSATYESENPIVAPPPPYSH.

This sequence belongs to the MDM34 family. In terms of assembly, component of the ER-mitochondria encounter structure (ERMES) or MDM complex, composed of MMM1, MDM10, MDM12 and MDM34.

The protein resides in the mitochondrion outer membrane. Functionally, component of the ERMES/MDM complex, which serves as a molecular tether to connect the endoplasmic reticulum (ER) and mitochondria. Components of this complex are involved in the control of mitochondrial shape and protein biogenesis, and function in nonvesicular lipid trafficking between the ER and mitochondria. MDM34 is required for the interaction of the ER-resident membrane protein MMM1 and the outer mitochondrial membrane-resident beta-barrel protein MDM10. In Scheffersomyces stipitis (strain ATCC 58785 / CBS 6054 / NBRC 10063 / NRRL Y-11545) (Yeast), this protein is Mitochondrial distribution and morphology protein 34.